A 665-amino-acid chain; its full sequence is Intraflagellar transport protein 70A (665 aa).

TPR repeat units follow at residues 11–44, 45–78, 154–187, 189–221, 393–424, 425–457, and 459–492; these read DGEF…SPRS, RAGL…HPEL, TDGQ…SGYQ, DLSY…GIRQ, LTKQ…EKYI, PVLM…CNDH, and VWKL…HYDN. The stretch at 508–535 forms a coiled coil; that stretch reads YIMTSQNEEAEELMRKIEKEEEQLSYDD. A TPR 8 repeat occupies 544–577; sequence CIVNLVIGTLYCAKGNYEFGISRVIKSLEPYNKK.

Belongs to the TTC30/dfy-1/fleer family.

It is found in the cell projection. The protein localises to the cilium. Required for polyglutamylation of axonemal tubulin. Plays a role in anterograde intraflagellar transport (IFT), the process by which cilia precursors are transported from the base of the cilium to the site of their incorporation at the tip. This chain is Intraflagellar transport protein 70A, found in Homo sapiens (Human).